A 91-amino-acid polypeptide reads, in one-letter code: Large ribosomal subunit protein bL27 (91 aa).

The segment at 1–26 (MAHKKGVGSSRNGRDSNPKMRGVKRF) is disordered.

Belongs to the bacterial ribosomal protein bL27 family.

The sequence is that of Large ribosomal subunit protein bL27 from Chloroflexus aurantiacus (strain ATCC 29366 / DSM 635 / J-10-fl).